We begin with the raw amino-acid sequence, 305 residues long: UDP-3-O-acyl-N-acetylglucosamine deacetylase (305 aa).

The Zn(2+) site is built by His-79, His-238, and Asp-242. His-265 functions as the Proton donor in the catalytic mechanism.

The protein belongs to the LpxC family. Zn(2+) serves as cofactor.

The enzyme catalyses a UDP-3-O-[(3R)-3-hydroxyacyl]-N-acetyl-alpha-D-glucosamine + H2O = a UDP-3-O-[(3R)-3-hydroxyacyl]-alpha-D-glucosamine + acetate. It functions in the pathway glycolipid biosynthesis; lipid IV(A) biosynthesis; lipid IV(A) from (3R)-3-hydroxytetradecanoyl-[acyl-carrier-protein] and UDP-N-acetyl-alpha-D-glucosamine: step 2/6. Functionally, catalyzes the hydrolysis of UDP-3-O-myristoyl-N-acetylglucosamine to form UDP-3-O-myristoylglucosamine and acetate, the committed step in lipid A biosynthesis. The sequence is that of UDP-3-O-acyl-N-acetylglucosamine deacetylase from Actinobacillus succinogenes (strain ATCC 55618 / DSM 22257 / CCUG 43843 / 130Z).